We begin with the raw amino-acid sequence, 192 residues long: Peptidyl-tRNA hydrolase (192 aa).

A tRNA-binding site is contributed by Tyr18. His23 functions as the Proton acceptor in the catalytic mechanism. TRNA-binding residues include Phe69, Asn71, and Asn117.

This sequence belongs to the PTH family. In terms of assembly, monomer.

It localises to the cytoplasm. The catalysed reaction is an N-acyl-L-alpha-aminoacyl-tRNA + H2O = an N-acyl-L-amino acid + a tRNA + H(+). Hydrolyzes ribosome-free peptidyl-tRNAs (with 1 or more amino acids incorporated), which drop off the ribosome during protein synthesis, or as a result of ribosome stalling. Its function is as follows. Catalyzes the release of premature peptidyl moieties from peptidyl-tRNA molecules trapped in stalled 50S ribosomal subunits, and thus maintains levels of free tRNAs and 50S ribosomes. The sequence is that of Peptidyl-tRNA hydrolase from Neisseria meningitidis serogroup C (strain 053442).